Consider the following 1700-residue polypeptide: MTSNSPIGLEGSDLSSINTMMSAVMSVASVTENGGSPQGIKSPMKPPGPNRIGRRNQETKEEKSSYNCPLCEKICTTQHQLTMHIRQHNTDTGGADHACSICGKSLSSASSLDRHMLVHSGERPYKCTVCGQSFTTNGNMHRHMKIHEKDTNSTTAAAPPSPLKRRRLSSKRKLSHDAESEDPGPAKKMVEDGQSGDLDKMSDEIFHCPVCFKEFVCKYELETHMETHSDNPLRCDICCVTFRTHRGLLRHNALVHKQLPRDAMGRPFIQNNPSIPAGFHDLGFTDFSCRKFPRISQAWCETNLRRCISEQHRFVCDTCDKAFPMLSSLILHRQSHIPADQGREKLQTKTLAAESLEQKAFLALLGLQHTKDVKPAPAEELLPDDNQAIQLQTLKYQLPQEPGCPTVLSVSPLDAASLGGSLTVLPATKENMKHLSLQPFQKGFIIQPDSSIVVKPISGESAIELADIQQILKMAASAPPQISLPPLSKAPATPLQAIFKHMPPLKPKPLVTPRTVVAASTPPPLINAQQASPGCISPSLPPQSLKFLKGSVEAVSNVHLLQSKSGIQPSTTTQLFLQQAGVELPGQPEMKTQLEQESIIEALLPLNMEAKIKQEITEGDLKAIMTGPSGKKTPAMRKVLYPCRFCNQVFAFSGVLRAHVRSHLGISPYQCNICDYIAADKAALIRHIRTHSGERPYICKICHYPFTVKANCERHLRKKHLKATRKDIEKNIEYVSSPTAELVDAFCAPETVCRLCGEDLKHYRALRIHMRTHCSRGLGGCHKGRKPFECKECNAPFVAKRNCIHHILKQHLHVPEKDIESYVLATNSGLGPADTPTDAASRGEEGSCVTFAECKPLATFLEPQNGFLHSSPTQPLPSHISVKLEPASSFAMDFNEPLDFSQKGLALVQVKQENVSSLLTSSSSSALYDCSMEPIDLSIPKSVKKGDKDTVVPSDAKKPEPEAGQAEPLSPRPPPCPTLSVTVEPKGSLETPTGTVVAVTTAAKLEPHTQPLQGSVQLAVPIYSPALVSNTPLLGNSAALLNNPALLRPLRPKPPLLLPKPSMTEELPPLASIAQIISSVSSAPTLLKTKVADPGPSITSSNTVATDSPGSSIPKAAATPTDTTSSKESSEPPPAASSPEEALPTEQGPAATSSSRKRGRKRGLRNRPLPNSSAVDLDSSGEFASIEKMLATTDTNKFSPFLQTAEDDTQEEVAGAPADQHGPADEEQGSPAEDRLLRAKRNSYANCLQKINCPHCPRVFPWASSLQRHMLTHTDSQSDTDTLTTPGEVLDLTAQAKEQPPAEGASEISPASQDLAIKEAKAAAAPSEEEEEKETEENPEPEEECRVEESTGAADAPEEDTASNQSLDLDFATKLMDFKLAESEAGSVDSQGPAQQEPKHACDTCGKNFKFLGTLSRHKKAHSCQEPKEEEAAAPSLENEGVGRAVEGPSPSPEPEEKPAESLAIDPTPGTREASVAKQNEETEGPTDGEGTAEKRGDGDKRPKTDSPKSMASKADKRKKVCSVCNKRFWSLQDLTRHMRSHTGERPYKCQTCERTFTLKHSLVRHQRIHQKARHSKHHGKDSDKDERAEEDSEDESTHSATNPASENEAESAPSTSNHVAVTRSRKESLSTSGKECSPEERAAAEQAAEPSAPKEQASPGETDPQSPAAIVQDLLELCGKRPAPILAATDGASQLLGME.

The interval 31-63 (TENGGSPQGIKSPMKPPGPNRIGRRNQETKEEK) is disordered. Phosphoserine occurs at positions 36 and 42. 3 consecutive C2H2-type zinc fingers follow at residues 66–88 (YNCPLCEKICTTQHQLTMHIRQH), 97–119 (HACSICGKSLSSASSLDRHMLVH), and 125–147 (YKCTVCGQSFTTNGNMHRHMKIH). The disordered stretch occupies residues 146–195 (IHEKDTNSTTAAAPPSPLKRRRLSSKRKLSHDAESEDPGPAKKMVEDGQS). Phosphoserine is present on Ser161. The span at 163 to 174 (LKRRRLSSKRKL) shows a compositional bias: basic residues. Ser175 and Ser180 each carry phosphoserine. Basic and acidic residues predominate over residues 184–195 (GPAKKMVEDGQS). Residues 206–228 (FHCPVCFKEFVCKYELETHMETH) form a C2H2-type 4 zinc finger. A Phosphoserine modification is found at Ser229. 2 consecutive C2H2-type zinc fingers follow at residues 233-256 (LRCDICCVTFRTHRGLLRHNALVH) and 314-336 (FVCDTCDKAFPMLSSLILHRQSH). Residues Lys433, Lys500, Lys549, Lys564, Lys591, and Lys611 each participate in a glycyl lysine isopeptide (Lys-Gly) (interchain with G-Cter in SUMO2) cross-link. Residue Lys613 forms a Glycyl lysine isopeptide (Lys-Gly) (interchain with G-Cter in SUMO1); alternate linkage. A Glycyl lysine isopeptide (Lys-Gly) (interchain with G-Cter in SUMO2); alternate cross-link involves residue Lys613. Lys622 is covalently cross-linked (Glycyl lysine isopeptide (Lys-Gly) (interchain with G-Cter in SUMO2)). 5 C2H2-type zinc fingers span residues 641-663 (YPCRFCNQVFAFSGVLRAHVRSH), 669-691 (YQCNICDYIAADKAALIRHIRTH), 697-720 (YICKICHYPFTVKANCERHLRKKH), 751-782 (TVCRLCGEDLKHYRALRIHMRTHCSRGLGGCH), and 788-813 (FECKECNAPFVAKRNCIHHILKQHLH). Glycyl lysine isopeptide (Lys-Gly) (interchain with G-Cter in SUMO2) cross-links involve residues Lys855, Lys883, and Lys911. Disordered regions lie at residues 939–991 (IPKS…SLET) and 1092–1177 (ADPG…AVDL). Over residues 944 to 961 (KKGDKDTVVPSDAKKPEP) the composition is skewed to basic and acidic residues. Phosphoserine is present on Ser970. Residues 1097–1111 (SITSSNTVATDSPGS) are compositionally biased toward polar residues. Phosphoserine occurs at positions 1125, 1137, and 1138. The span at 1137-1146 (SSPEEALPTE) shows a compositional bias: low complexity. Basic residues predominate over residues 1155-1165 (SRKRGRKRGLR). 4 positions are modified to phosphoserine: Ser1172, Ser1179, Ser1180, and Ser1230. 4 disordered regions span residues 1195-1235 (TNKF…AEDR), 1273-1368 (HTDS…QSLD), 1383-1521 (SEAG…RKKV), and 1564-1670 (VRHQ…SPAA). A C2H2-type 12 zinc finger spans residues 1251 to 1273 (INCPHCPRVFPWASSLQRHMLTH). The segment covering 1273 to 1285 (HTDSQSDTDTLTT) has biased composition (low complexity). Over residues 1327–1346 (SEEEEEKETEENPEPEEECR) the composition is skewed to acidic residues. Residues 1400–1422 (HACDTCGKNFKFLGTLSRHKKAH) form a C2H2-type 13 zinc finger. Phosphoserine is present on residues Ser1450 and Ser1452. A compositionally biased stretch (basic and acidic residues) spans 1492–1507 (TAEKRGDGDKRPKTDS). C2H2-type zinc fingers lie at residues 1520–1542 (KVCSVCNKRFWSLQDLTRHMRSH) and 1548–1570 (YKCQTCERTFTLKHSLVRHQRIH). Positions 1564–1580 (VRHQRIHQKARHSKHHG) are enriched in basic residues. Phosphoserine occurs at positions 1593 and 1606. The segment covering 1645-1660 (AEQAAEPSAPKEQASP) has biased composition (low complexity). Ser1667 carries the phosphoserine modification.

The protein belongs to the krueppel C2H2-type zinc-finger protein family. As to quaternary structure, interacts with NEUROD1. Interacts with AR. As to expression, expressed in splenic B-cells.

Its subcellular location is the nucleus speckle. In terms of biological role, transcription factor that binds specifically to the RAS-responsive elements (RRE) of gene promoters. Represses the angiotensinogen gene. Negatively regulates the transcriptional activity of AR. Potentiates the transcriptional activity of NEUROD1. Binds specifically to the allelic variant of the CDKN2A promoter present in Balb/c mice, which leads to a down-regulation of CDKN2A expression in this strain, and, as a consequence, to an elevated susceptibility to pristane-induced tumors. Promotes brown adipocyte differentiation. May be involved in Ras/Raf-mediated cell differentiation by enhancing calcitonin expression. This chain is Ras-responsive element-binding protein 1 (Rreb1), found in Mus musculus (Mouse).